The sequence spans 91 residues: UPF0358 protein SAS1047 (91 aa).

Belongs to the UPF0358 family.

The protein is UPF0358 protein SAS1047 of Staphylococcus aureus (strain MSSA476).